Consider the following 305-residue polypeptide: Methionyl-tRNA formyltransferase (305 aa).

Residue 111–114 (SLLP) coordinates (6S)-5,6,7,8-tetrahydrofolate.

It belongs to the Fmt family.

It carries out the reaction L-methionyl-tRNA(fMet) + (6R)-10-formyltetrahydrofolate = N-formyl-L-methionyl-tRNA(fMet) + (6S)-5,6,7,8-tetrahydrofolate + H(+). Functionally, attaches a formyl group to the free amino group of methionyl-tRNA(fMet). The formyl group appears to play a dual role in the initiator identity of N-formylmethionyl-tRNA by promoting its recognition by IF2 and preventing the misappropriation of this tRNA by the elongation apparatus. The polypeptide is Methionyl-tRNA formyltransferase (Helicobacter acinonychis (strain Sheeba)).